The chain runs to 93 residues: Envelope small membrane protein (93 aa).

Residues 1 to 11 (MMNLLNKSLEE) are Virion surface-facing. A helical membrane pass occupies residues 12-32 (NGSVLTAFYIFVAFVALYLLG). Topologically, residues 33–93 (RALQAFVQAA…NEFPKNGWKQ (61 aa)) are intravirion.

The protein belongs to the gammacoronaviruses E protein family. As to quaternary structure, homooligomer. Interacts with the M membrane protein in the budding compartment of the host cell, which is located between endoplasmic reticulum and the Golgi complex. The cytoplasmic tails of both proteins are important for this function. Interacts with Nucleoprotein.

It is found in the host Golgi apparatus membrane. Its function is as follows. Plays a central role in virus morphogenesis and assembly. Acts as a viroporin and self-assembles in host membranes forming pentameric protein-lipid pores that allow ion transport. Also plays a role in the induction of apoptosis. This Avian infectious bronchitis virus (strain Portugal/322/82) (IBV) protein is Envelope small membrane protein.